A 230-amino-acid chain; its full sequence is Orotidine 5'-phosphate decarboxylase (230 aa).

Substrate-binding positions include Asp-10, Lys-31, 58–67, Thr-117, Arg-179, Gln-188, Gly-208, and Arg-209; that span reads DLKLHDIPNT. The active-site Proton donor is Lys-60.

It belongs to the OMP decarboxylase family. Type 1 subfamily. Homodimer.

The catalysed reaction is orotidine 5'-phosphate + H(+) = UMP + CO2. It participates in pyrimidine metabolism; UMP biosynthesis via de novo pathway; UMP from orotate: step 2/2. In terms of biological role, catalyzes the decarboxylation of orotidine 5'-monophosphate (OMP) to uridine 5'-monophosphate (UMP). This chain is Orotidine 5'-phosphate decarboxylase, found in Staphylococcus epidermidis (strain ATCC 35984 / DSM 28319 / BCRC 17069 / CCUG 31568 / BM 3577 / RP62A).